Here is a 118-residue protein sequence, read N- to C-terminus: Ribonuclease P protein component (118 aa).

Belongs to the RnpA family. In terms of assembly, consists of a catalytic RNA component (M1 or rnpB) and a protein subunit.

It carries out the reaction Endonucleolytic cleavage of RNA, removing 5'-extranucleotides from tRNA precursor.. Its function is as follows. RNaseP catalyzes the removal of the 5'-leader sequence from pre-tRNA to produce the mature 5'-terminus. It can also cleave other RNA substrates such as 4.5S RNA. The protein component plays an auxiliary but essential role in vivo by binding to the 5'-leader sequence and broadening the substrate specificity of the ribozyme. In Enterococcus faecalis (strain ATCC 700802 / V583), this protein is Ribonuclease P protein component.